A 213-amino-acid polypeptide reads, in one-letter code: MDNKRKLLKIITIGDRMVGKLSIIKNYMGRPFFQWGNSIPFDFHFKEIIIDNETVSLQLWNTHGSAYEDSKIYYRDVDCCVVCFNIHNEQSFNNLIYWIKELEANTLVDEKVPFVLIGTKSDIERTEKSISKERIEQWCKQIEDQGIVKEKIHYFETSAKLSTNIIEAYETIVKIALNQYKNKQKNSINISIEPEKPKGIFQIMIFMGVVFYF.

14–21 (GDRMVGKL) serves as a coordination point for GTP. Positions 36–43 (GNSIPFDF) match the Effector region motif. Residues 61–65 (NTHGS) and 119–122 (TKSD) contribute to the GTP site.

Belongs to the small GTPase superfamily. Rab family.

The chain is Ras-related protein RabK1 (rabK1) from Dictyostelium discoideum (Social amoeba).